The chain runs to 498 residues: ATP synthase subunit alpha 1 (498 aa).

It belongs to the ATPase alpha/beta chains family. F-type ATPases have 2 components, CF(1) - the catalytic core - and CF(0) - the membrane proton channel. CF(1) has five subunits: alpha(3), beta(3), gamma(1), delta(1), epsilon(1). CF(0) has three main subunits: a(1), b(2) and c(9-12). The alpha and beta chains form an alternating ring which encloses part of the gamma chain. CF(1) is attached to CF(0) by a central stalk formed by the gamma and epsilon chains, while a peripheral stalk is formed by the delta and b chains.

The protein resides in the cell membrane. The catalysed reaction is ATP + H2O + 4 H(+)(in) = ADP + phosphate + 5 H(+)(out). Produces ATP from ADP in the presence of a proton gradient across the membrane. The alpha chain is a regulatory subunit. This Listeria monocytogenes serotype 4b (strain F2365) protein is ATP synthase subunit alpha 1.